The sequence spans 206 residues: GTP cyclohydrolase 1 (206 aa).

Zn(2+) is bound by residues cysteine 97, histidine 100, and cysteine 168.

Belongs to the GTP cyclohydrolase I family. In terms of assembly, toroid-shaped homodecamer, composed of two pentamers of five dimers.

The catalysed reaction is GTP + H2O = 7,8-dihydroneopterin 3'-triphosphate + formate + H(+). The protein operates within cofactor biosynthesis; 7,8-dihydroneopterin triphosphate biosynthesis; 7,8-dihydroneopterin triphosphate from GTP: step 1/1. This Chromobacterium violaceum (strain ATCC 12472 / DSM 30191 / JCM 1249 / CCUG 213 / NBRC 12614 / NCIMB 9131 / NCTC 9757 / MK) protein is GTP cyclohydrolase 1.